Reading from the N-terminus, the 109-residue chain is UPF0060 membrane protein mma_0129 (109 aa).

The next 4 membrane-spanning stretches (helical) occupy residues 7–27 (VALFVLTAIAEIVGCYLPYLW), 31–51 (GASIWLLVPAALALGIFVWLL), 63–83 (AAYGGAYVAVALAWLWVVDGI), and 87–107 (NWDFVGVAVTLAGMGIILFAP).

The protein belongs to the UPF0060 family.

It is found in the cell inner membrane. This Janthinobacterium sp. (strain Marseille) (Minibacterium massiliensis) protein is UPF0060 membrane protein mma_0129.